The sequence spans 176 residues: Macro domain-containing protein LMOf2365_2748 (176 aa).

The 175-residue stretch at 1–175 folds into the Macro domain; sequence MEITVVKGDI…LYNKLINSEV (175 aa).

This sequence belongs to the MacroD-type family.

This Listeria monocytogenes serotype 4b (strain F2365) protein is Macro domain-containing protein LMOf2365_2748.